We begin with the raw amino-acid sequence, 118 residues long: MVESMIDRVLLELNRTDGVKGSMVVGKDGLVIASQLPGNVDAELVGAMASAAFGAAERTSSEIGLSGLEQTMIEGEHGKTLMVDAGEGILVVLTDAKVNLGLIRITMKRAADKIKAMF.

The protein to M.jannaschii MJ0310 and MJ1340.

This is an uncharacterized protein from Methanocaldococcus jannaschii (strain ATCC 43067 / DSM 2661 / JAL-1 / JCM 10045 / NBRC 100440) (Methanococcus jannaschii).